A 108-amino-acid polypeptide reads, in one-letter code: Nucleoid-associated protein ACP_0492 (108 aa).

The protein belongs to the YbaB/EbfC family. In terms of assembly, homodimer.

It localises to the cytoplasm. The protein resides in the nucleoid. In terms of biological role, binds to DNA and alters its conformation. May be involved in regulation of gene expression, nucleoid organization and DNA protection. In Acidobacterium capsulatum (strain ATCC 51196 / DSM 11244 / BCRC 80197 / JCM 7670 / NBRC 15755 / NCIMB 13165 / 161), this protein is Nucleoid-associated protein ACP_0492.